Reading from the N-terminus, the 206-residue chain is Large ribosomal subunit protein uL4 (206 aa).

It belongs to the universal ribosomal protein uL4 family. As to quaternary structure, part of the 50S ribosomal subunit.

One of the primary rRNA binding proteins, this protein initially binds near the 5'-end of the 23S rRNA. It is important during the early stages of 50S assembly. It makes multiple contacts with different domains of the 23S rRNA in the assembled 50S subunit and ribosome. Its function is as follows. Forms part of the polypeptide exit tunnel. The protein is Large ribosomal subunit protein uL4 of Nitrobacter winogradskyi (strain ATCC 25391 / DSM 10237 / CIP 104748 / NCIMB 11846 / Nb-255).